A 294-amino-acid chain; its full sequence is Probable endonuclease 4 (294 aa).

Histidine 78, histidine 118, glutamate 157, aspartate 191, histidine 194, histidine 228, aspartate 241, histidine 243, and glutamate 273 together coordinate Zn(2+).

The protein belongs to the AP endonuclease 2 family. Requires Zn(2+) as cofactor.

The catalysed reaction is Endonucleolytic cleavage to 5'-phosphooligonucleotide end-products.. Functionally, endonuclease IV plays a role in DNA repair. It cleaves phosphodiester bonds at apurinic or apyrimidinic (AP) sites, generating a 3'-hydroxyl group and a 5'-terminal sugar phosphate. The protein is Probable endonuclease 4 of Streptomyces coelicolor (strain ATCC BAA-471 / A3(2) / M145).